The sequence spans 749 residues: Probable serine/threonine-protein kinase fhkD (749 aa).

In terms of domain architecture, FHA spans 47 to 150 (IFFGRNPKRC…NGTFVKGCIL (104 aa)). Over residues 84-126 (NNNNNDGDNNNNNNNNNNNNNNNNNNNNNNNNNNNNNNNNNNN) the composition is skewed to low complexity. Residues 84–130 (NNNNNDGDNNNNNNNNNNNNNNNNNNNNNNNNNNNNNNNNNNNTTKN) are disordered. Residues 199-472 (YSIQGILGTG…TKGALSHDWF (274 aa)) enclose the Protein kinase domain. Residues 205–213 (LGTGNFSVV) and K228 each bind ATP. D323 acts as the Proton acceptor in catalysis. Disordered stretches follow at residues 512-620 (NIPM…PAII) and 640-749 (CTPT…LKGS). A compositionally biased stretch (low complexity) spans 516 to 561 (TLNSTTTNTTSPNNNNNNNNNNNNKNNNKNIIKSLNSNSNNYNNNS). Residues 562 to 572 (VLKKTSQSPKT) show a composition bias toward polar residues. Low complexity-rich tracts occupy residues 590–611 (NNNN…NNNN) and 651–667 (TNST…TSNS). Over residues 668–687 (VTMGTSSTSIPVSNSITMKS) the composition is skewed to polar residues. The span at 696-707 (DGDKKRKEKESS) shows a compositional bias: basic and acidic residues. Residues 708–739 (SSENVNDVIVINSNNHNNNNNNNHNINNGISS) show a composition bias toward low complexity.

Belongs to the protein kinase superfamily. CAMK Ser/Thr protein kinase family. CHK2 subfamily.

The catalysed reaction is L-seryl-[protein] + ATP = O-phospho-L-seryl-[protein] + ADP + H(+). It carries out the reaction L-threonyl-[protein] + ATP = O-phospho-L-threonyl-[protein] + ADP + H(+). In Dictyostelium discoideum (Social amoeba), this protein is Probable serine/threonine-protein kinase fhkD (fhkD).